The chain runs to 633 residues: ATP-dependent RNA helicase mss116, mitochondrial (633 aa).

The transit peptide at 1 to 32 (MKTGRTRPLRVFDILVPPWPPTVPHRIKLPRG) directs the protein to the mitochondrion. Positions 38–66 (EFYSAITRNWNKLKGLKNCWQIWKDVQEI) match the Q motif motif. The region spanning 70–248 (IRKYQGESTV…TAEKLSNIQT (179 aa)) is the Helicase ATP-binding domain. Position 83 to 90 (83 to 90 (PGNNDGAH)) interacts with ATP. Residues 195–198 (RPLE) carry the DEAD box motif. In terms of domain architecture, Helicase C-terminal spans 262 to 429 (FLADVKRILQ…NVDLVIQVGL (168 aa)). Residues 567-633 (FNYATGNDLN…GGRGGKPRAA (67 aa)) form a disordered region.

It belongs to the DEAD box helicase family. DDX18/HAS1 subfamily.

The protein localises to the mitochondrion matrix. The enzyme catalyses ATP + H2O = ADP + phosphate + H(+). ATP-dependent RNA helicase required for mitochondrial splicing of group I and II introns. Also required for efficient mitochondrial translation. This Aspergillus oryzae (strain ATCC 42149 / RIB 40) (Yellow koji mold) protein is ATP-dependent RNA helicase mss116, mitochondrial (mss116).